We begin with the raw amino-acid sequence, 585 residues long: Testis-specific serine kinase substrate (585 aa).

Positions 91–108 (EPDSSGTDSTTEDSGPLA) are enriched in low complexity. Residues 91–126 (EPDSSGTDSTTEDSGPLALPGPPASPTTPWAPEDPD) are disordered. A phosphoserine mark is found at serine 224, serine 281, and serine 309. Disordered regions lie at residues 262 to 309 (SRHG…PSLS) and 559 to 585 (LEGSTGAMGGGSTGGAPPKRGGPGSEQ).

Post-translationally, phosphorylated on serine residue(s) by STK22A/TSSK1 and STK22B/TSSK2.

It is found in the cytoplasm. The protein resides in the cytoskeleton. The protein localises to the microtubule organizing center. It localises to the centrosome. Its subcellular location is the centriole. In terms of biological role, may play a role in testicular physiology, most probably in the process of spermatogenesis or spermatid development. The polypeptide is Testis-specific serine kinase substrate (Tsks) (Rattus norvegicus (Rat)).